The primary structure comprises 244 residues: MAVISMKQLLEAGVHFGHQTRRWNPKMDRYIFTERNGIYIIDLQKTVKKVEEAYNFVRELAADGGKVLFVGTKKQAQDSVKEEAERCGMYYINQRWLGGTLTNFETIQKRIDRLKKLEKMEEDGTFDVLPKKEVILLKKEMERLEKFLGGIKDMNSLPDALFVIDPRKERIAIAEAHKLNIPIVAIVDTNCDPDEIDYVIPGNDDAIRAVKLLTGKMADAVVEATSGAGEEAEEVAEVTEETTA.

The protein belongs to the universal ribosomal protein uS2 family.

The protein is Small ribosomal subunit protein uS2 of Halalkalibacterium halodurans (strain ATCC BAA-125 / DSM 18197 / FERM 7344 / JCM 9153 / C-125) (Bacillus halodurans).